Consider the following 343-residue polypeptide: S-adenosylmethionine:tRNA ribosyltransferase-isomerase (343 aa).

This sequence belongs to the QueA family. Monomer.

Its subcellular location is the cytoplasm. It carries out the reaction 7-aminomethyl-7-carbaguanosine(34) in tRNA + S-adenosyl-L-methionine = epoxyqueuosine(34) in tRNA + adenine + L-methionine + 2 H(+). It functions in the pathway tRNA modification; tRNA-queuosine biosynthesis. Transfers and isomerizes the ribose moiety from AdoMet to the 7-aminomethyl group of 7-deazaguanine (preQ1-tRNA) to give epoxyqueuosine (oQ-tRNA). The protein is S-adenosylmethionine:tRNA ribosyltransferase-isomerase of Coxiella burnetii (strain Dugway 5J108-111).